Here is a 136-residue protein sequence, read N- to C-terminus: Histone H3.1t (136 aa).

The interval 1 to 43 (MARTKQTARKSTGGKAPRKQLATKVARKSAPATGGVKKPHRYR) is disordered. Residue Arg3 is modified to Asymmetric dimethylarginine; by PRMT6; alternate. Arg3 bears the Citrulline; alternate mark. Thr4 is modified (phosphothreonine; by HASPIN). Position 5 is an allysine; alternate (Lys5). Lys5 carries the N6,N6,N6-trimethyllysine; alternate modification. Position 5 is an N6,N6-dimethyllysine; alternate (Lys5). Lys5 is subject to N6-(2-hydroxyisobutyryl)lysine; alternate. Lys5 is modified (N6-(beta-hydroxybutyryl)lysine; alternate). Position 5 is an N6-acetyllysine; alternate (Lys5). The residue at position 5 (Lys5) is an N6-methyllysine; alternate. Gln6 carries the 5-glutamyl dopamine; alternate modification. Gln6 carries the 5-glutamyl serotonin; alternate modification. Residue Thr7 is modified to Phosphothreonine; by PKC. Arg9 bears the Citrulline; alternate mark. The residue at position 9 (Arg9) is a Symmetric dimethylarginine; by PRMT5; alternate. At Lys10 the chain carries N6,N6,N6-trimethyllysine; alternate. Lys10 bears the N6,N6-dimethyllysine; alternate mark. Residue Lys10 is modified to N6-(2-hydroxyisobutyryl)lysine; alternate. Position 10 is an N6-(beta-hydroxybutyryl)lysine; alternate (Lys10). Lys10 carries the post-translational modification N6-acetyllysine; alternate. N6-methyllysine; alternate is present on Lys10. An N6-lactoyllysine; alternate modification is found at Lys10. Ser11 is subject to ADP-ribosylserine; alternate. The residue at position 11 (Ser11) is a Phosphoserine; alternate; by AURKB, AURKC, RPS6KA3, RPS6KA4 and RPS6KA5. Thr12 bears the Phosphothreonine; by PKC mark. Lys15 bears the N6-(2-hydroxyisobutyryl)lysine; alternate mark. At Lys15 the chain carries N6-(beta-hydroxybutyryl)lysine; alternate. Lys15 carries the N6-acetyllysine; alternate modification. Lys15 carries the post-translational modification N6-lactoyllysine; alternate. An N6-glutaryllysine; alternate modification is found at Lys15. Lys15 carries the post-translational modification N6-succinyllysine; alternate. A Citrulline; alternate modification is found at Arg18. Arg18 carries the asymmetric dimethylarginine; by CARM1; alternate modification. An N6-(2-hydroxyisobutyryl)lysine; alternate mark is found at Lys19 and Lys24. N6-(beta-hydroxybutyryl)lysine; alternate is present on residues Lys19 and Lys24. Residues Lys19 and Lys24 each carry the N6-acetyllysine; alternate modification. An N6-methyllysine; alternate mark is found at Lys19 and Lys24. 2 positions are modified to N6-lactoyllysine; alternate: Lys19 and Lys24. Residues Lys19 and Lys24 each carry the N6-glutaryllysine; alternate modification. Lys19 and Lys24 each carry N6-butyryllysine; alternate. Arg27 is modified (citrulline). Lys28 is subject to N6,N6,N6-trimethyllysine; alternate. At Lys28 the chain carries N6,N6-dimethyllysine; alternate. N6-(2-hydroxyisobutyryl)lysine; alternate is present on Lys28. At Lys28 the chain carries N6-acetyllysine; alternate. Lys28 is modified (N6-methyllysine; alternate). An N6-lactoyllysine; alternate modification is found at Lys28. Lys28 carries the N6-glutaryllysine; alternate modification. Residue Ser29 is modified to ADP-ribosylserine; alternate. Ser29 bears the Phosphoserine; alternate; by AURKB, AURKC and RPS6KA5 mark. Lys37 carries the N6,N6,N6-trimethyllysine; alternate modification. Lys37 carries the N6,N6-dimethyllysine; alternate modification. Lys37 is subject to N6-(2-hydroxyisobutyryl)lysine; alternate. Lys37 carries the N6-acetyllysine; alternate modification. Lys37 is modified (N6-methyllysine; alternate). Lys38 is subject to N6-methyllysine. Residue Tyr42 is modified to Phosphotyrosine. Lys57 carries the N6,N6,N6-trimethyllysine; alternate modification. Lys57 carries the post-translational modification N6-(2-hydroxyisobutyryl)lysine; alternate. Position 57 is an N6-(beta-hydroxybutyryl)lysine; alternate (Lys57). Lys57 carries the N6-acetyllysine; alternate modification. Lys57 carries the post-translational modification N6-lactoyllysine; alternate. The residue at position 57 (Lys57) is an N6-glutaryllysine; alternate. Lys57 is subject to N6-succinyllysine; alternate. N6-methyllysine; by EHMT2; alternate is present on Lys57. Ser58 carries the phosphoserine modification. An N6-(2-hydroxyisobutyryl)lysine; alternate mark is found at Lys65 and Lys80. N6-methyllysine; alternate occurs at positions 65 and 80. Position 80 is an N6,N6,N6-trimethyllysine; alternate (Lys80). At Lys80 the chain carries N6,N6-dimethyllysine; alternate. At Lys80 the chain carries N6-acetyllysine; alternate. N6-lactoyllysine; alternate is present on Lys80. Lys80 carries the post-translational modification N6-glutaryllysine; alternate. At Lys80 the chain carries N6-succinyllysine; alternate. Phosphothreonine is present on Thr81. Ser87 bears the Phosphoserine mark. A Phosphothreonine modification is found at Thr108. Lys116 and Lys123 each carry N6-acetyllysine; alternate. An N6-glutaryllysine; alternate mark is found at Lys116 and Lys123. Lys123 is modified (N6-(2-hydroxyisobutyryl)lysine; alternate). Lys123 carries the post-translational modification N6-methyllysine; alternate. N6-succinyllysine; alternate is present on Lys123.

It belongs to the histone H3 family. As to quaternary structure, the nucleosome is a histone octamer containing two molecules each of H2A, H2B, H3 and H4 assembled in one H3-H4 heterotetramer and two H2A-H2B heterodimers. The octamer wraps approximately 147 bp of DNA. Interacts with TONSL; CHAF1A and CHAF1B. Post-translationally, acetylation is generally linked to gene activation. Acetylation on Lys-10 (H3K9ac) impairs methylation at Arg-9 (H3R8me2s). Acetylation on Lys-19 (H3K18ac) and Lys-24 (H3K24ac) favors methylation at Arg-18 (H3R17me). Acetylation at Lys-123 (H3K122ac) by EP300/p300 plays a central role in chromatin structure: localizes at the surface of the histone octamer and stimulates transcription, possibly by promoting nucleosome instability. In terms of processing, citrullination at Arg-9 (H3R8ci) and/or Arg-18 (H3R17ci) by PADI4 impairs methylation and represses transcription. Asymmetric dimethylation at Arg-18 (H3R17me2a) by CARM1 is linked to gene activation. Symmetric dimethylation at Arg-9 (H3R8me2s) by PRMT5 is linked to gene repression. Asymmetric dimethylation at Arg-3 (H3R2me2a) by PRMT6 is linked to gene repression and is mutually exclusive with H3 Lys-5 methylation (H3K4me2 and H3K4me3). H3R2me2a is present at the 3' of genes regardless of their transcription state and is enriched on inactive promoters, while it is absent on active promoters. Post-translationally, methylation at Lys-5 (H3K4me), Lys-37 (H3K36me) and Lys-80 (H3K79me) are linked to gene activation. Methylation at Lys-5 (H3K4me) facilitates subsequent acetylation of H3 and H4. Methylation at Lys-80 (H3K79me) is associated with DNA double-strand break (DSB) responses and is a specific target for TP53BP1. Methylation at Lys-10 (H3K9me) and Lys-28 (H3K27me) are linked to gene repression. Methylation at Lys-10 (H3K9me) is a specific target for HP1 proteins (CBX1, CBX3 and CBX5) and prevents subsequent phosphorylation at Ser-11 (H3S10ph) and acetylation of H3 and H4. Methylation at Lys-5 (H3K4me) and Lys-80 (H3K79me) require preliminary monoubiquitination of H2B at 'Lys-120'. Methylation at Lys-10 (H3K9me) and Lys-28 (H3K27me) are enriched in inactive X chromosome chromatin. Monomethylation at Lys-57 (H3K56me1) by EHMT2/G9A in G1 phase promotes interaction with PCNA and is required for DNA replication. In terms of processing, phosphorylated at Thr-4 (H3T3ph) by HASPIN during prophase and dephosphorylated during anaphase. Phosphorylation at Ser-11 (H3S10ph) by AURKB is crucial for chromosome condensation and cell-cycle progression during mitosis and meiosis. In addition phosphorylation at Ser-11 (H3S10ph) by RPS6KA4 and RPS6KA5 is important during interphase because it enables the transcription of genes following external stimulation, like mitogens, stress, growth factors or UV irradiation and result in the activation of genes, such as c-fos and c-jun. Phosphorylation at Ser-11 (H3S10ph), which is linked to gene activation, prevents methylation at Lys-10 (H3K9me) but facilitates acetylation of H3 and H4. Phosphorylation at Ser-11 (H3S10ph) by AURKB mediates the dissociation of HP1 proteins (CBX1, CBX3 and CBX5) from heterochromatin. Phosphorylation at Ser-11 (H3S10ph) is also an essential regulatory mechanism for neoplastic cell transformation. Phosphorylated at Ser-29 (H3S28ph) by MAP3K20 isoform 1, RPS6KA5 or AURKB during mitosis or upon ultraviolet B irradiation. Phosphorylation at Thr-7 (H3T6ph) by PRKCB is a specific tag for epigenetic transcriptional activation that prevents demethylation of Lys-5 (H3K4me) by LSD1/KDM1A. At centromeres, specifically phosphorylated at Thr-12 (H3T11ph) from prophase to early anaphase, by DAPK3 and PKN1. Phosphorylation at Thr-12 (H3T11ph) by PKN1 or isoform M2 of PKM (PKM2) is a specific tag for epigenetic transcriptional activation that promotes demethylation of Lys-10 (H3K9me) by KDM4C/JMJD2C. Phosphorylation at Tyr-42 (H3Y41ph) by JAK2 promotes exclusion of CBX5 (HP1 alpha) from chromatin. Ubiquitinated. Post-translationally, lysine deamination at Lys-5 (H3K4all) to form allysine is mediated by LOXL2. Allysine formation by LOXL2 only takes place on H3K4me3 and results in gene repression. In terms of processing, butyrylation of histones marks active promoters and competes with histone acetylation. It is present during late spermatogenesis. Succinylation at Lys-80 (H3K79succ) by KAT2A takes place with a maximum frequency around the transcription start sites of genes. It gives a specific tag for epigenetic transcription activation. Desuccinylation at Lys-123 (H3K122succ) by SIRT7 in response to DNA damage promotes chromatin condensation and double-strand breaks (DSBs) repair. Post-translationally, serine ADP-ribosylation constitutes the primary form of ADP-ribosylation of proteins in response to DNA damage. Serine ADP-ribosylation at Ser-11 (H3S10ADPr) is mutually exclusive with phosphorylation at Ser-11 (H3S10ph) and impairs acetylation at Lys-10 (H3K9ac). Expressed in testicular cells.

Its subcellular location is the nucleus. The protein resides in the chromosome. Core component of nucleosome. Nucleosomes wrap and compact DNA into chromatin, limiting DNA accessibility to the cellular machineries which require DNA as a template. Histones thereby play a central role in transcription regulation, DNA repair, DNA replication and chromosomal stability. DNA accessibility is regulated via a complex set of post-translational modifications of histones, also called histone code, and nucleosome remodeling. In Homo sapiens (Human), this protein is Histone H3.1t.